Reading from the N-terminus, the 72-residue chain is Translation initiation factor IF-1 (72 aa).

The region spanning Met1–Lys72 is the S1-like domain.

It belongs to the IF-1 family. Component of the 30S ribosomal translation pre-initiation complex which assembles on the 30S ribosome in the order IF-2 and IF-3, IF-1 and N-formylmethionyl-tRNA(fMet); mRNA recruitment can occur at any time during PIC assembly.

The protein localises to the cytoplasm. Its function is as follows. One of the essential components for the initiation of protein synthesis. Stabilizes the binding of IF-2 and IF-3 on the 30S subunit to which N-formylmethionyl-tRNA(fMet) subsequently binds. Helps modulate mRNA selection, yielding the 30S pre-initiation complex (PIC). Upon addition of the 50S ribosomal subunit IF-1, IF-2 and IF-3 are released leaving the mature 70S translation initiation complex. The protein is Translation initiation factor IF-1 of Sulfurovum sp. (strain NBC37-1).